The chain runs to 406 residues: S-adenosylmethionine synthase (406 aa).

140-145 (GRGSVD) is a binding site for ATP.

The protein belongs to the AdoMet synthase 2 family. Mg(2+) serves as cofactor.

The catalysed reaction is L-methionine + ATP + H2O = S-adenosyl-L-methionine + phosphate + diphosphate. Its pathway is amino-acid biosynthesis; S-adenosyl-L-methionine biosynthesis; S-adenosyl-L-methionine from L-methionine: step 1/1. Catalyzes the formation of S-adenosylmethionine from methionine and ATP. In Aeropyrum pernix (strain ATCC 700893 / DSM 11879 / JCM 9820 / NBRC 100138 / K1), this protein is S-adenosylmethionine synthase (mat).